The primary structure comprises 108 residues: MLYPIFIFILAGLCEIGGGYLIWLWLREGQCSLVGLIGGAILMLYGVIATFQSFPSFGRVYAAYGGVFIIMSLIFAMVVDKQMPDKYDVIGAIICIVGVLVMLLPSRA.

4 helical membrane-spanning segments follow: residues 5-25 (IFIFILAGLCEIGGGYLIWLW), 31-51 (CSLVGLIGGAILMLYGVIATF), 60-80 (VYAAYGGVFIIMSLIFAMVVD), and 86-106 (KYDVIGAIICIVGVLVMLLPS).

This sequence belongs to the UPF0060 family.

Its subcellular location is the cell membrane. The protein is UPF0060 membrane protein SAB2216c of Staphylococcus aureus (strain bovine RF122 / ET3-1).